We begin with the raw amino-acid sequence, 121 residues long: Basic phospholipase A2 homolog blK-PLA2 (121 aa).

Cystine bridges form between Cys-26–Cys-115, Cys-28–Cys-44, Cys-43–Cys-95, Cys-49–Cys-121, Cys-50–Cys-88, Cys-57–Cys-81, and Cys-75–Cys-86. An important for membrane-damaging activities in eukaryotes and bacteria; heparin-binding region spans residues 105–117 (KKYRYHLKPFCKK).

This sequence belongs to the phospholipase A2 family. Group II subfamily. K49 sub-subfamily. In terms of assembly, homodimer; non-covalently linked. Expressed by the venom gland.

Its subcellular location is the secreted. Snake venom phospholipase A2 (PLA2) homolog that lacks enzymatic activity. Shows myotoxic and edema-inducing activities in vivo. A model of myotoxic mechanism has been proposed: an apo Lys49-PLA2 is activated by the entrance of a hydrophobic molecule (e.g. fatty acid) at the hydrophobic channel of the protein leading to a reorientation of a monomer. This reorientation causes a transition between 'inactive' to 'active' states, causing alignment of C-terminal and membrane-docking sites (MDoS) side-by-side and putting the membrane-disruption sites (MDiS) in the same plane, exposed to solvent and in a symmetric position for both monomers. The MDoS region stabilizes the toxin on membrane by the interaction of charged residues with phospholipid head groups. Subsequently, the MDiS region destabilizes the membrane with penetration of hydrophobic residues. This insertion causes a disorganization of the membrane, allowing an uncontrolled influx of ions (i.e. calcium and sodium), and eventually triggering irreversible intracellular alterations and cell death. This Bothrops leucurus (Whitetail lancehead) protein is Basic phospholipase A2 homolog blK-PLA2.